Here is a 148-residue protein sequence, read N- to C-terminus: Large ribosomal subunit protein bL9 (148 aa).

The protein belongs to the bacterial ribosomal protein bL9 family.

Functionally, binds to the 23S rRNA. This Listeria innocua serovar 6a (strain ATCC BAA-680 / CLIP 11262) protein is Large ribosomal subunit protein bL9.